A 1178-amino-acid chain; its full sequence is Mitosis inhibitor protein kinase SWE1 (1178 aa).

Residues 1-35 (MDSNPCQDVSGDTSSTPMANNNPTNDSTISSQNHS) are compositionally biased toward polar residues. Disordered regions lie at residues 1-61 (MDSN…HSQQ), 188-209 (NSQI…SSSM), 288-336 (SNNQ…SKGF), 378-434 (PTHT…SSNI), 451-473 (NHAR…TNIS), 524-543 (KNSI…PIKR), 584-606 (QRFP…QHHD), and 721-754 (KREI…GDDP). Residues 37 to 55 (IGLRKHQQQHYHQHSHSQM) show a composition bias toward basic residues. Residues 299-308 (VSQSPSPSSK) are compositionally biased toward polar residues. Low complexity predominate over residues 388-413 (SSLNPPSSSTSNSTTAAITSTSPPAN). Low complexity predominate over residues 591 to 601 (NPNTTTNNNNT). One can recognise a Protein kinase domain in the interval 791–1154 (MKNIKYIGSG…ACNILEMPEC (364 aa)). Residues 797–805 (IGSGAFSIA) and lysine 818 contribute to the ATP site. Catalysis depends on aspartate 929, which acts as the Proton acceptor. The Mg(2+) site is built by asparagine 934 and aspartate 947. Positions 1034 to 1068 (HNPNTNSNISGSGSRSGSGSTGGNGSAGDGSTNST) are disordered. Over residues 1037 to 1046 (NTNSNISGSG) the composition is skewed to low complexity. A compositionally biased stretch (gly residues) spans 1047–1061 (SRSGSGSTGGNGSAG).

This sequence belongs to the protein kinase superfamily. Ser/Thr protein kinase family. WEE1 subfamily. Phosphorylated.

Its subcellular location is the bud neck. The protein localises to the nucleus. It carries out the reaction L-seryl-[protein] + ATP = O-phospho-L-seryl-[protein] + ADP + H(+). The enzyme catalyses L-threonyl-[protein] + ATP = O-phospho-L-threonyl-[protein] + ADP + H(+). Functionally, protein kinase that acts as a negative regulator of entry into mitosis (G2 to M transition) by phosphorylating and inhibiting the mitosis-promoting cyclin B-bound CDC28 at 'Tyr-18'. SWE1-mediated inhibition of CDC28 acts in a cell size or morphogenesis checkpoint to delay mitosis in response to defects in growth, actin organization or bud formation. Plays an important role in filamentous growth. This Candida albicans (strain SC5314 / ATCC MYA-2876) (Yeast) protein is Mitosis inhibitor protein kinase SWE1 (SWE1).